The primary structure comprises 170 residues: Inner membrane protein p22 (170 aa).

The Intravirion portion of the chain corresponds to 1 to 3 (MST). Residues 4–24 (LLIALIALIVLLIIILVVFLY) form a helical membrane-spanning segment. Over 25-170 (YKKQQPPKKV…LYLPRNHKYA (146 aa)) the chain is Virion surface.

It belongs to the asfivirus inner membrane protein p22 family.

It localises to the virion membrane. The protein resides in the host cell membrane. The sequence is that of Inner membrane protein p22 from Ornithodoros (relapsing fever ticks).